The following is a 201-amino-acid chain: 3-isopropylmalate dehydratase small subunit (201 aa).

It belongs to the LeuD family. LeuD type 1 subfamily. Heterodimer of LeuC and LeuD.

The catalysed reaction is (2R,3S)-3-isopropylmalate = (2S)-2-isopropylmalate. The protein operates within amino-acid biosynthesis; L-leucine biosynthesis; L-leucine from 3-methyl-2-oxobutanoate: step 2/4. In terms of biological role, catalyzes the isomerization between 2-isopropylmalate and 3-isopropylmalate, via the formation of 2-isopropylmaleate. In Sinorhizobium medicae (strain WSM419) (Ensifer medicae), this protein is 3-isopropylmalate dehydratase small subunit.